The sequence spans 329 residues: Myoblast determination protein 1 homolog (329 aa).

The bHLH domain occupies D160 to L211. A disordered region spans residues N256–H279. The segment covering Y263–E273 has biased composition (acidic residues).

Efficient DNA binding requires dimerization with another bHLH protein. As to expression, body wall muscle cells; in clonal muscle precursors, in a set of early embryonic blastomeres (the ms-granddaughters), and in six glial-like cells called GLRS.

It is found in the nucleus. Accumulation defines the body wall muscle cell fate during embryogenesis. The chain is Myoblast determination protein 1 homolog (hlh-1) from Caenorhabditis briggsae.